A 318-amino-acid polypeptide reads, in one-letter code: Malate dehydrogenase (318 aa).

Residues 10–15 and aspartate 34 contribute to the NAD(+) site; that span reads GAGNIG. Arginine 83 and arginine 89 together coordinate substrate. Residues asparagine 96 and 119-121 contribute to the NAD(+) site; that span reads ITN. Residues asparagine 121 and arginine 152 each coordinate substrate. Histidine 176 (proton acceptor) is an active-site residue.

This sequence belongs to the LDH/MDH superfamily. MDH type 3 family.

It carries out the reaction (S)-malate + NAD(+) = oxaloacetate + NADH + H(+). Functionally, catalyzes the reversible oxidation of malate to oxaloacetate. The protein is Malate dehydrogenase of Rhodospirillum rubrum (strain ATCC 11170 / ATH 1.1.1 / DSM 467 / LMG 4362 / NCIMB 8255 / S1).